A 543-amino-acid polypeptide reads, in one-letter code: CTP synthase (543 aa).

The interval 1–265 is amidoligase domain; sequence MTRYIFVTGG…DDIVVERFGL (265 aa). S13 serves as a coordination point for CTP. UTP is bound at residue S13. ATP contacts are provided by residues 14-19 and D71; that span reads SLGKGI. Mg(2+) is bound by residues D71 and E139. CTP contacts are provided by residues 146 to 148, 186 to 191, and K222; these read DIE and KTKPTQ. UTP contacts are provided by residues 186–191 and K222; that span reads KTKPTQ. The Glutamine amidotransferase type-1 domain occupies 290–541; the sequence is TIAMVGKYME…VNAALAQKAR (252 aa). Residue G351 participates in L-glutamine binding. The Nucleophile; for glutamine hydrolysis role is filled by C378. L-glutamine contacts are provided by residues 379–382, E402, and R469; that span reads LGMQ. Active-site residues include H514 and E516.

Belongs to the CTP synthase family. In terms of assembly, homotetramer.

The catalysed reaction is UTP + L-glutamine + ATP + H2O = CTP + L-glutamate + ADP + phosphate + 2 H(+). The enzyme catalyses L-glutamine + H2O = L-glutamate + NH4(+). It catalyses the reaction UTP + NH4(+) + ATP = CTP + ADP + phosphate + 2 H(+). It participates in pyrimidine metabolism; CTP biosynthesis via de novo pathway; CTP from UDP: step 2/2. Its activity is regulated as follows. Allosterically activated by GTP, when glutamine is the substrate; GTP has no effect on the reaction when ammonia is the substrate. The allosteric effector GTP functions by stabilizing the protein conformation that binds the tetrahedral intermediate(s) formed during glutamine hydrolysis. Inhibited by the product CTP, via allosteric rather than competitive inhibition. In terms of biological role, catalyzes the ATP-dependent amination of UTP to CTP with either L-glutamine or ammonia as the source of nitrogen. Regulates intracellular CTP levels through interactions with the four ribonucleotide triphosphates. The chain is CTP synthase from Azotobacter vinelandii (strain DJ / ATCC BAA-1303).